Reading from the N-terminus, the 444-residue chain is Retinoic acid receptor alpha-A (444 aa).

Residues 1 to 71 form a modulating region; that stretch reads MYESVDVNPF…PPSPPPPPRI (71 aa). A compositionally biased stretch (polar residues) spans 35–46; sequence SIRHQHWSGSNH. Positions 35-67 are disordered; sequence SIRHQHWSGSNHSIETQSTSSEEIVPSPPSPPP. The span at 47–58 shows a compositional bias: low complexity; the sequence is SIETQSTSSEEI. The segment at residues 72 to 147 is a DNA-binding region (nuclear receptor); the sequence is YKPCFVCQDK…VGMSKESVRN (76 aa). 2 consecutive NR C4-type zinc fingers follow at residues 75-95 and 111-130; these read CFVC…CEGC and CHRE…CQYC. A hinge region spans residues 148-169; sequence DRNKKKKEEKKPECTENYTLSP. In terms of domain architecture, NR LBD spans 170–404; that stretch reads DTEQMIDRVR…PLIQEMLENS (235 aa). Residues 395 to 403 carry the 9aaTAD motif; that stretch reads PLIQEMLEN. The segment at 402–444 is disordered; the sequence is ENSEGLESSSGAQGSRASATTPGSCSPSLSPNSAQSSPPTQSP.

Belongs to the nuclear hormone receptor family. NR1 subfamily. Heterodimer; with an rxr molecule. Binds DNA preferentially as a rar/rxr heterodimer. In terms of tissue distribution, in the embryo, zygotic expression largely overlaps that of rarab, with high levels in hindbrain, lateral mesoderm and tail bud. In the adult, strong expression in brain and muscle, weaker expression in ovary, liver and digestive tract.

Its subcellular location is the nucleus. Functionally, receptor for retinoic acid. Retinoic acid receptors bind as heterodimers to their target response elements in response to their ligands, all-trans or 9-cis retinoic acid, and regulate gene expression in various biological processes. The rar/rxr heterodimers bind to the retinoic acid response elements (RARE) composed of tandem 5'-AGGTCA-3' sites known as DR1-DR5. Required for hindbrain patterning. In Danio rerio (Zebrafish), this protein is Retinoic acid receptor alpha-A.